We begin with the raw amino-acid sequence, 179 residues long: Large ribosomal subunit protein uL5 (179 aa).

Belongs to the universal ribosomal protein uL5 family. As to quaternary structure, part of the 50S ribosomal subunit; part of the 5S rRNA/L5/L18/L25 subcomplex. Contacts the 5S rRNA and the P site tRNA. Forms a bridge to the 30S subunit in the 70S ribosome.

In terms of biological role, this is one of the proteins that bind and probably mediate the attachment of the 5S RNA into the large ribosomal subunit, where it forms part of the central protuberance. In the 70S ribosome it contacts protein S13 of the 30S subunit (bridge B1b), connecting the 2 subunits; this bridge is implicated in subunit movement. Contacts the P site tRNA; the 5S rRNA and some of its associated proteins might help stabilize positioning of ribosome-bound tRNAs. The polypeptide is Large ribosomal subunit protein uL5 (Francisella philomiragia subsp. philomiragia (strain ATCC 25017 / CCUG 19701 / FSC 153 / O#319-036)).